Here is a 447-residue protein sequence, read N- to C-terminus: Kynurenine 3-monooxygenase (447 aa).

It belongs to the aromatic-ring hydroxylase family. KMO subfamily. FAD is required as a cofactor.

The catalysed reaction is L-kynurenine + NADPH + O2 + H(+) = 3-hydroxy-L-kynurenine + NADP(+) + H2O. The protein operates within cofactor biosynthesis; NAD(+) biosynthesis; quinolinate from L-kynurenine: step 1/3. Catalyzes the hydroxylation of L-kynurenine (L-Kyn) to form 3-hydroxy-L-kynurenine (L-3OHKyn). Required for synthesis of quinolinic acid. The protein is Kynurenine 3-monooxygenase of Christiangramia forsetii (strain DSM 17595 / CGMCC 1.15422 / KT0803) (Gramella forsetii).